We begin with the raw amino-acid sequence, 447 residues long: Ribosomal protein uS12 methylthiotransferase RimO (447 aa).

In terms of domain architecture, MTTase N-terminal spans 10–120 (PKVGFVSLGC…VVNAVHDVVP (111 aa)). Cys19, Cys55, Cys84, Cys153, Cys157, and Cys160 together coordinate [4Fe-4S] cluster. The Radical SAM core domain maps to 139–377 (LTPRHYAYLK…MAHQQAISAA (239 aa)). In terms of domain architecture, TRAM spans 380–447 (QMKIGKEIEV…DEYDLWAEML (68 aa)).

This sequence belongs to the methylthiotransferase family. RimO subfamily. It depends on [4Fe-4S] cluster as a cofactor.

It localises to the cytoplasm. It carries out the reaction L-aspartate(89)-[ribosomal protein uS12]-hydrogen + (sulfur carrier)-SH + AH2 + 2 S-adenosyl-L-methionine = 3-methylsulfanyl-L-aspartate(89)-[ribosomal protein uS12]-hydrogen + (sulfur carrier)-H + 5'-deoxyadenosine + L-methionine + A + S-adenosyl-L-homocysteine + 2 H(+). Its function is as follows. Catalyzes the methylthiolation of an aspartic acid residue of ribosomal protein uS12. In Pseudomonas syringae pv. syringae (strain B728a), this protein is Ribosomal protein uS12 methylthiotransferase RimO.